The following is a 147-amino-acid chain: Flagellar assembly factor FliW (147 aa).

The protein belongs to the FliW family. As to quaternary structure, interacts with translational regulator CsrA and flagellin(s).

It localises to the cytoplasm. Its function is as follows. Acts as an anti-CsrA protein, binds CsrA and prevents it from repressing translation of its target genes, one of which is flagellin. Binds to flagellin and participates in the assembly of the flagellum. This Chromobacterium violaceum (strain ATCC 12472 / DSM 30191 / JCM 1249 / CCUG 213 / NBRC 12614 / NCIMB 9131 / NCTC 9757 / MK) protein is Flagellar assembly factor FliW.